The sequence spans 225 residues: Acidic leucine-rich nuclear phosphoprotein 32-related protein 2 (225 aa).

LRR repeat units follow at residues 39 to 60 (KLEL…PVLP), 61 to 82 (ALNY…DVLI), and 87 to 107 (EIKK…RTLK). An LRRCT domain is found at 121 to 161 (SSLGLLDDYRVKMFEMIPSLKILDGCDVDGEEVEEEFAAGE). Residues 155–175 (EEFAAGEGAEDSDEGDSDEDG) are compositionally biased toward acidic residues. Positions 155-225 (EEFAAGEGAE…DEPEAKKSAE (71 aa)) are disordered.

This sequence belongs to the ANP32 family.

The sequence is that of Acidic leucine-rich nuclear phosphoprotein 32-related protein 2 from Caenorhabditis elegans.